The primary structure comprises 367 residues: 3-dehydroquinate synthase (367 aa).

NAD(+)-binding positions include 112 to 116 (GVIGD), 136 to 137 (TT), lysine 149, lysine 158, and 176 to 179 (TLKT). Zn(2+) is bound by residues glutamate 191, histidine 256, and histidine 273.

The protein belongs to the sugar phosphate cyclases superfamily. Dehydroquinate synthase family. NAD(+) serves as cofactor. The cofactor is Co(2+). Zn(2+) is required as a cofactor.

Its subcellular location is the cytoplasm. It carries out the reaction 7-phospho-2-dehydro-3-deoxy-D-arabino-heptonate = 3-dehydroquinate + phosphate. It participates in metabolic intermediate biosynthesis; chorismate biosynthesis; chorismate from D-erythrose 4-phosphate and phosphoenolpyruvate: step 2/7. In terms of biological role, catalyzes the conversion of 3-deoxy-D-arabino-heptulosonate 7-phosphate (DAHP) to dehydroquinate (DHQ). The chain is 3-dehydroquinate synthase from Prochlorococcus marinus (strain SARG / CCMP1375 / SS120).